A 359-amino-acid polypeptide reads, in one-letter code: Phospho-N-acetylmuramoyl-pentapeptide-transferase (359 aa).

The next 10 helical transmembrane spans lie at I27 to W47, T73 to L93, T94 to V114, L134 to Y154, F166 to S186, G197 to A217, G233 to W253, L261 to L281, L286 to V306, and K336 to L356.

Belongs to the glycosyltransferase 4 family. MraY subfamily. The cofactor is Mg(2+).

The protein resides in the cell inner membrane. It carries out the reaction UDP-N-acetyl-alpha-D-muramoyl-L-alanyl-gamma-D-glutamyl-meso-2,6-diaminopimeloyl-D-alanyl-D-alanine + di-trans,octa-cis-undecaprenyl phosphate = di-trans,octa-cis-undecaprenyl diphospho-N-acetyl-alpha-D-muramoyl-L-alanyl-D-glutamyl-meso-2,6-diaminopimeloyl-D-alanyl-D-alanine + UMP. It functions in the pathway cell wall biogenesis; peptidoglycan biosynthesis. In terms of biological role, catalyzes the initial step of the lipid cycle reactions in the biosynthesis of the cell wall peptidoglycan: transfers peptidoglycan precursor phospho-MurNAc-pentapeptide from UDP-MurNAc-pentapeptide onto the lipid carrier undecaprenyl phosphate, yielding undecaprenyl-pyrophosphoryl-MurNAc-pentapeptide, known as lipid I. The sequence is that of Phospho-N-acetylmuramoyl-pentapeptide-transferase from Maridesulfovibrio salexigens (strain ATCC 14822 / DSM 2638 / NCIMB 8403 / VKM B-1763) (Desulfovibrio salexigens).